Consider the following 186-residue polypeptide: ATP synthase subunit b, chloroplastic (186 aa).

Residues 26–44 (ILETNLINLGVVIGTLLYF) form a helical membrane-spanning segment.

The protein belongs to the ATPase B chain family. In terms of assembly, F-type ATPases have 2 components, F(1) - the catalytic core - and F(0) - the membrane proton channel. F(1) has five subunits: alpha(3), beta(3), gamma(1), delta(1), epsilon(1). F(0) has four main subunits: a(1), b(1), b'(1) and c(10-14). The alpha and beta chains form an alternating ring which encloses part of the gamma chain. F(1) is attached to F(0) by a central stalk formed by the gamma and epsilon chains, while a peripheral stalk is formed by the delta, b and b' chains.

It is found in the plastid. The protein resides in the chloroplast thylakoid membrane. F(1)F(0) ATP synthase produces ATP from ADP in the presence of a proton or sodium gradient. F-type ATPases consist of two structural domains, F(1) containing the extramembraneous catalytic core and F(0) containing the membrane proton channel, linked together by a central stalk and a peripheral stalk. During catalysis, ATP synthesis in the catalytic domain of F(1) is coupled via a rotary mechanism of the central stalk subunits to proton translocation. Functionally, component of the F(0) channel, it forms part of the peripheral stalk, linking F(1) to F(0). In Chara vulgaris (Common stonewort), this protein is ATP synthase subunit b, chloroplastic.